A 199-amino-acid polypeptide reads, in one-letter code: Nucleoside triphosphate pyrophosphatase (199 aa).

D76 (proton acceptor) is an active-site residue.

Belongs to the Maf family. Requires a divalent metal cation as cofactor.

It is found in the cytoplasm. The catalysed reaction is a ribonucleoside 5'-triphosphate + H2O = a ribonucleoside 5'-phosphate + diphosphate + H(+). The enzyme catalyses a 2'-deoxyribonucleoside 5'-triphosphate + H2O = a 2'-deoxyribonucleoside 5'-phosphate + diphosphate + H(+). Functionally, nucleoside triphosphate pyrophosphatase. May have a dual role in cell division arrest and in preventing the incorporation of modified nucleotides into cellular nucleic acids. The sequence is that of Nucleoside triphosphate pyrophosphatase from Roseobacter denitrificans (strain ATCC 33942 / OCh 114) (Erythrobacter sp. (strain OCh 114)).